The primary structure comprises 338 residues: UDP-3-O-acylglucosamine N-acyltransferase (338 aa).

H243 (proton acceptor) is an active-site residue.

It belongs to the transferase hexapeptide repeat family. LpxD subfamily. Homotrimer.

It carries out the reaction a UDP-3-O-[(3R)-3-hydroxyacyl]-alpha-D-glucosamine + a (3R)-hydroxyacyl-[ACP] = a UDP-2-N,3-O-bis[(3R)-3-hydroxyacyl]-alpha-D-glucosamine + holo-[ACP] + H(+). It participates in bacterial outer membrane biogenesis; LPS lipid A biosynthesis. Functionally, catalyzes the N-acylation of UDP-3-O-acylglucosamine using 3-hydroxyacyl-ACP as the acyl donor. Is involved in the biosynthesis of lipid A, a phosphorylated glycolipid that anchors the lipopolysaccharide to the outer membrane of the cell. In Amoebophilus asiaticus (strain 5a2), this protein is UDP-3-O-acylglucosamine N-acyltransferase.